The primary structure comprises 648 residues: Threonine--tRNA ligase (648 aa).

In terms of domain architecture, TGS spans 1–61 (MITITFPDGA…EEDGSIEIIT (61 aa)). Positions 242-540 (DHRKLGKELD…LIETYKGAFP (299 aa)) are catalytic. Zn(2+) contacts are provided by Cys-336, His-387, and His-517.

It belongs to the class-II aminoacyl-tRNA synthetase family. In terms of assembly, homodimer. Zn(2+) serves as cofactor.

It is found in the cytoplasm. It catalyses the reaction tRNA(Thr) + L-threonine + ATP = L-threonyl-tRNA(Thr) + AMP + diphosphate + H(+). In terms of biological role, catalyzes the attachment of threonine to tRNA(Thr) in a two-step reaction: L-threonine is first activated by ATP to form Thr-AMP and then transferred to the acceptor end of tRNA(Thr). Also edits incorrectly charged L-seryl-tRNA(Thr). This is Threonine--tRNA ligase from Streptococcus equi subsp. zooepidemicus (strain H70).